A 126-amino-acid polypeptide reads, in one-letter code: MKSLILVAAGGAIGASLRYLLGAGVYRLTGGPTGFPVAIMMANVLGSIAMGFFVVWAAHRGLTHLSPFVMTGVLGGFTTFSAFSLETVTLFERGEIWQAGLYVALSVGLSVFGLMAGLWVARGVYL.

4 helical membrane passes run 5–25 (ILVA…GAGV), 37–57 (VAIM…VVWA), 65–85 (LSPF…AFSL), and 101–121 (LYVA…LWVA). Residues Gly-75 and Thr-78 each contribute to the Na(+) site.

It belongs to the fluoride channel Fluc/FEX (TC 1.A.43) family.

It is found in the cell inner membrane. It carries out the reaction fluoride(in) = fluoride(out). With respect to regulation, na(+) is not transported, but it plays an essential structural role and its presence is essential for fluoride channel function. In terms of biological role, fluoride-specific ion channel. Important for reducing fluoride concentration in the cell, thus reducing its toxicity. The protein is Fluoride-specific ion channel FluC of Roseobacter denitrificans (strain ATCC 33942 / OCh 114) (Erythrobacter sp. (strain OCh 114)).